A 129-amino-acid chain; its full sequence is Small ribosomal subunit protein uS11 (129 aa).

It belongs to the universal ribosomal protein uS11 family. Part of the 30S ribosomal subunit. Interacts with proteins S7 and S18. Binds to IF-3.

In terms of biological role, located on the platform of the 30S subunit, it bridges several disparate RNA helices of the 16S rRNA. Forms part of the Shine-Dalgarno cleft in the 70S ribosome. The chain is Small ribosomal subunit protein uS11 from Bartonella quintana (strain Toulouse) (Rochalimaea quintana).